We begin with the raw amino-acid sequence, 755 residues long: Proprotein convertase subtilisin/kexin type 4 (755 aa).

An N-terminal signal peptide occupies residues 1–25; it reads MRPAPIALWLRLVLALALVRPRAVG. A propeptide spanning residues 26 to 113 is cleaved from the precursor; sequence WAPVRAPIYV…QQTLQRRVKR (88 aa). Positions 126-440 constitute a Peptidase S8 domain; it reads QWYMNSEAQP…YGLLDAGLLV (315 aa). Catalysis depends on charge relay system residues Asp158, His199, and Ser373. In terms of domain architecture, P/Homo B spans 449–581; that stretch reads TQPQRKCAVR…TLLLYGTAED (133 aa). 2 N-linked (GlcNAc...) asparagine glycosylation sites follow: Asn475 and Asn629. The helical transmembrane segment at 709–729 threads the bilayer; that stretch reads AMVLSLLAVTLGGPVLCGMSM.

It belongs to the peptidase S8 family. Furin subfamily. The proPCSK4 form interacts with HSPA5; the interaction takes place at the endoplasmic reticulum. In terms of processing, N-glycosylated. Synthesized in the endoplasmic reticulum as a zymogen, is matured by autocatalytic cleavage between the prodomain and the catalytic domain. As to expression, placenta.

The protein resides in the membrane. The protein localises to the cytoplasmic vesicle. It localises to the secretory vesicle. It is found in the acrosome membrane. Proprotein convertase involved in the processing of hormone and other protein precursors at sites comprised of pairs of basic amino acid residues. In males, important for ADAM2 processing as well as other acrosomal proteins with roles in fertilization and critical for normal fertilization events such as sperm capacitation, acrosome reaction and binding of sperm to zona pellucida. Also plays a role in female fertility, involved in the regulation of trophoblast migration and placental development, may be through the proteolytical processing and activation of proteins such as IGF2. May also participate in folliculogenesis in the ovaries. The protein is Proprotein convertase subtilisin/kexin type 4 of Homo sapiens (Human).